Here is a 211-residue protein sequence, read N- to C-terminus: N-(5'-phosphoribosyl)anthranilate isomerase (211 aa).

The protein belongs to the TrpF family.

The catalysed reaction is N-(5-phospho-beta-D-ribosyl)anthranilate = 1-(2-carboxyphenylamino)-1-deoxy-D-ribulose 5-phosphate. It functions in the pathway amino-acid biosynthesis; L-tryptophan biosynthesis; L-tryptophan from chorismate: step 3/5. The protein is N-(5'-phosphoribosyl)anthranilate isomerase of Methanococcus maripaludis (strain C6 / ATCC BAA-1332).